Consider the following 202-residue polypeptide: Small ribosomal subunit protein uS4c (202 aa).

The region spanning 90–153 (MRLDNIIFRL…KSEAIISKNI (64 aa)) is the S4 RNA-binding domain.

It belongs to the universal ribosomal protein uS4 family. As to quaternary structure, part of the 30S ribosomal subunit. Contacts protein S5. The interaction surface between S4 and S5 is involved in control of translational fidelity.

The protein localises to the plastid. The protein resides in the chloroplast. In terms of biological role, one of the primary rRNA binding proteins, it binds directly to 16S rRNA where it nucleates assembly of the body of the 30S subunit. Functionally, with S5 and S12 plays an important role in translational accuracy. The sequence is that of Small ribosomal subunit protein uS4c (rps4) from Hookeria lucens (Moss).